A 449-amino-acid polypeptide reads, in one-letter code: UDP-glycosyltransferase 76E6 (449 aa).

UDP-alpha-D-glucose-binding positions include S274, 333 to 335 (APQ), 350 to 358 (HCGWNSTLE), and 372 to 375 (HGEQ).

The protein belongs to the UDP-glycosyltransferase family.

The sequence is that of UDP-glycosyltransferase 76E6 (UGT76E6) from Arabidopsis thaliana (Mouse-ear cress).